The following is an 87-amino-acid chain: Antitoxin YefM (87 aa).

The protein belongs to the phD/YefM antitoxin family. As to quaternary structure, forms a complex with YoeB which inhibits its toxin activity.

Functionally, antitoxin component of a type II toxin-antitoxin (TA) system. A probable antitoxin for the putative mRNA interferase YeoB. The chain is Antitoxin YefM from Streptomyces coelicolor (strain ATCC BAA-471 / A3(2) / M145).